A 381-amino-acid chain; its full sequence is MNLHEYQAKELLRVAGVPIPPGEIATTPEQAEAIAKKLGTAVMVKAQVHAGGRGKAGGVKFCPTPEAAKEKATAILGMTIKDLTVEKVLVTVAADIASEAYVGIIVDRATKKPVFMVSAAGGIDIEEVAATTPEKILYHPVDTRYGLLPFEAMRMGFFLYQDVKLARQAAKIMQQLYTAFMSAGCSIAEINPLVVTPQNELIAVDGKMVIDDNELDRLPQIAALRDESSEAPSEVDARNANLTFIKLDGNVGCVVNGAGLAMATMDLVKYYGGDPANFLDIGGSSNPEKVVNALRIITADPNVKCILFNIFGGITRTDDVANGIVTATKANPLKVPIVIRLTGTNEELALQILKENGFSASSDMDSAVQRAVELATKGGAA.

Residues 9–236 (KELLRVAGVP…ESSEAPSEVD (228 aa)) enclose the ATP-grasp domain. Residues K45, 52 to 54 (GRG), A94, and E99 each bind ATP. Mg(2+) contacts are provided by N191 and D205. Substrate contacts are provided by residues N256 and 313 to 315 (GIT).

Belongs to the succinate/malate CoA ligase beta subunit family. In terms of assembly, heterotetramer of two alpha and two beta subunits. Mg(2+) is required as a cofactor.

It carries out the reaction succinate + ATP + CoA = succinyl-CoA + ADP + phosphate. The catalysed reaction is GTP + succinate + CoA = succinyl-CoA + GDP + phosphate. Its pathway is carbohydrate metabolism; tricarboxylic acid cycle; succinate from succinyl-CoA (ligase route): step 1/1. Functionally, succinyl-CoA synthetase functions in the citric acid cycle (TCA), coupling the hydrolysis of succinyl-CoA to the synthesis of either ATP or GTP and thus represents the only step of substrate-level phosphorylation in the TCA. The beta subunit provides nucleotide specificity of the enzyme and binds the substrate succinate, while the binding sites for coenzyme A and phosphate are found in the alpha subunit. This Gemmatimonas aurantiaca (strain DSM 14586 / JCM 11422 / NBRC 100505 / T-27) protein is Succinate--CoA ligase [ADP-forming] subunit beta.